The chain runs to 1163 residues: MGPPEKESKAILKARGLEEEQKSERKMTSPENDSKSIQKDQGPEQEQTSESTMGPPEKESKAILKARGLEEEQKSERKMTSPENDSKSIQKDQGPEQEQTSESTMGPPEKDSKAILKARGLEEEQKSESTMSPSENVSRAILKDSGSEEVEQASERKMTSPENDSKSIQKDQGPEQEQTSETLQSKEEDEVTEADKDNGGDLQDYKAHVIAKFDTSVDLHYDSPEMKLLSDAFKPYQKTFQPHTIILHGRPGVGKSALARSIVLGWAQGKLFQKMSFVIFFSVREIKWTEKSSLAQLIAKECPDSWDLVTKIMSQPERLLFVIDGLDDMDSVLQHDDMTLSRDWKDEQPIYILMYSLLRKALLPQSFLIITTRNTGLEKLKSMVVSPLYILVEGLSASRRSQLVLENISNESDRIQVFHSLIENHQLFDQCQAPSVCSLVCEALQLQKKLGKRCTLPCQTLTGLYATLVFHQLTLKRPSQSALSQEEQITLVGLCMMAAEGVWTMRSVFYDDDLKNYSLKESEILALFHMNILLQVGHNSEQCYVFSHLSLQDFFAALYYVLEGLEEWNQHFCFIENQRSIMEVKRTDDTRLLGMKRFLFGLMNKDILKTLEVLFEYPVIPTVEQKLQHWVSLIAQQVNGTSPMDTLDAFYCLFESQDEEFVGGALKRFQEVWLLINQKMDLKVSSYCLKHCQNLKAIRVDIRDLLSVDNTLELCPVVTVQETQCKPLLMEWWGNFCSVLGSLRNLKELDLGDSILSQRAMKILCLELRNQSCRIQKLTFKSAEVVSGLKHLWKLLFSNQNLKYLNLGNTPMKDDDMKLACEALKHPKCSVETLRLDSCELTIIGYEMISTLLISTTRLKCLSLAKNRVGVKSMISLGNALSSSMCLLQKLILDNCGLTPASCHLLVSALFSNQNLTHLCLSNNSLGTEGVQQLCQFLRNPECALQRLILNHCNIVDDAYGFLAMRLANNTKLTHLSLTMNPVGDGAMKLLCEALKEPTCYLQELELVDCQLTQNCCEDLACMITTTKHLKSLDLGNNALGDKGVITLCEGLKQSSSSLRRLGLGACKLTSNCCEALSLAISCNPHLNSLNLVKNDFSTSGMLKLCSAFQCPVSNLGIIGLWKQEYYARVRRQLEEVEFVKPHVVIDGDWYASDEDDRNWWKN.

3 stretches are compositionally biased toward basic and acidic residues: residues 1–42 (MGPP…KDQG), 56–94 (PEKE…KDQG), and 108–127 (PEKD…EQKS). The disordered stretch occupies residues 1 to 201 (MGPPEKESKA…TEADKDNGGD (201 aa)). A compositionally biased stretch (polar residues) spans 128-137 (ESTMSPSENV). A compositionally biased stretch (basic and acidic residues) spans 153–173 (ASERKMTSPENDSKSIQKDQG). In terms of domain architecture, NACHT spans 243–565 (HTIILHGRPG…AALYYVLEGL (323 aa)). An ATP-binding site is contributed by 249 to 256 (GRPGVGKS). LRR repeat units follow at residues 801–822 (NLKY…LACE), 830–851 (SVET…MIST), 858–878 (RLKC…ISLG), 887–906 (LLQK…CHLL), 915–935 (NLTH…QQLC), 944–964 (ALQR…GFLA), 972–993 (KLTH…LLCE), 1001–1022 (YLQE…DLAC), 1029–1050 (HLKS…TLCE), 1058–1079 (SLRR…ALSL), and 1086–1107 (HLNS…KLCS).

It belongs to the NLRP family. In terms of assembly, component of the subcortical maternal complex (SCMC), at least composed of NLRP5, KHDC3, OOEP, and TLE6. Within the complex, interacts with OOEP, KHDC3 and TLE6. The SCMC may facilitate translocation of its components between the nuclear and cytoplasmic compartments. As part of the SCMC interacts with the SCMC-associated protein ZBED3. As part of the SCMC interacts with the SCMC-associated protein CFL1/Cofilin-1. Interacts with PRKCE. Interacts with TUBB3 at cytoskeleton microtubules. Phosphorylated by PRKCE.

The protein resides in the cytoplasm. It is found in the cytoplasmic vesicle. The protein localises to the secretory vesicle. It localises to the cortical granule. Its subcellular location is the mitochondrion. The protein resides in the nucleus. It is found in the nucleolus. The protein localises to the golgi apparatus. Component of the subcortical maternal complex (SCMC), a multiprotein complex that plays a key role in early embryonic development. The SCMC complex is a structural constituent of cytoplasmic lattices, which consist in fibrous structures found in the cytoplasm of oocytes and preimplantation embryos. They are required to store maternal proteins critical for embryonic development, such as proteins that control epigenetic reprogramming of the preimplantation embryo, and prevent their degradation or activation. Required for the localization of cortical granules to the cortex of oocytes, via association with the cortical actin scaffold. Required for cortical actin clearance prior to oocyte exocytosis and prevention of polyspermy. Involved in regulating post-fertilization Ca(2+) release and endoplasmic reticulum storage (ER) storage via regulation of cellular localization. May be involved in the localization of mitochondria to the cytoplasm and perinuclear region in oocytes and early stage embryos, independent of its role in CPL formation. The sequence is that of NACHT, LRR and PYD domains-containing protein 5 from Mus musculus (Mouse).